We begin with the raw amino-acid sequence, 269 residues long: Eukaryotic translation initiation factor 3 subunit G-1 (269 aa).

An RRM domain is found at 188–266; sequence AAIRISNLSE…LILSVEWSKP (79 aa).

This sequence belongs to the eIF-3 subunit G family. Component of the eukaryotic translation initiation factor 3 (eIF-3) complex. The eIF-3 complex interacts with pix.

Its subcellular location is the cytoplasm. In terms of biological role, RNA-binding component of the eukaryotic translation initiation factor 3 (eIF-3) complex, which is involved in protein synthesis of a specialized repertoire of mRNAs and, together with other initiation factors, stimulates binding of mRNA and methionyl-tRNAi to the 40S ribosome. The eIF-3 complex specifically targets and initiates translation of a subset of mRNAs involved in cell proliferation. This subunit can bind 18S rRNA. This chain is Eukaryotic translation initiation factor 3 subunit G-1, found in Drosophila virilis (Fruit fly).